A 477-amino-acid chain; its full sequence is Ribulose bisphosphate carboxylase large chain (477 aa).

Positions 1–2 (MS) are excised as a propeptide. Residue Pro-3 is modified to N-acetylproline. An N6,N6,N6-trimethyllysine modification is found at Lys-14. Substrate contacts are provided by Asn-123 and Thr-173. The active-site Proton acceptor is the Lys-175. Substrate is bound at residue Lys-177. Positions 201, 203, and 204 each coordinate Mg(2+). Position 201 is an N6-carboxylysine (Lys-201). His-294 acts as the Proton acceptor in catalysis. Substrate contacts are provided by Arg-295, His-327, and Ser-379.

It belongs to the RuBisCO large chain family. Type I subfamily. Heterohexadecamer of 8 large chains and 8 small chains; disulfide-linked. The disulfide link is formed within the large subunit homodimers. It depends on Mg(2+) as a cofactor. Post-translationally, the disulfide bond which can form in the large chain dimeric partners within the hexadecamer appears to be associated with oxidative stress and protein turnover.

The protein resides in the plastid. It is found in the chloroplast. The enzyme catalyses 2 (2R)-3-phosphoglycerate + 2 H(+) = D-ribulose 1,5-bisphosphate + CO2 + H2O. It catalyses the reaction D-ribulose 1,5-bisphosphate + O2 = 2-phosphoglycolate + (2R)-3-phosphoglycerate + 2 H(+). RuBisCO catalyzes two reactions: the carboxylation of D-ribulose 1,5-bisphosphate, the primary event in carbon dioxide fixation, as well as the oxidative fragmentation of the pentose substrate in the photorespiration process. Both reactions occur simultaneously and in competition at the same active site. This Solanum lycopersicum (Tomato) protein is Ribulose bisphosphate carboxylase large chain (rbcL).